The sequence spans 427 residues: Enolase (427 aa).

(2R)-2-phosphoglycerate is bound at residue Q163. The Proton donor role is filled by E205. Positions 242, 285, and 312 each coordinate Mg(2+). The (2R)-2-phosphoglycerate site is built by K337, R366, S367, and K388. The active-site Proton acceptor is K337.

This sequence belongs to the enolase family. Mg(2+) is required as a cofactor.

It localises to the cytoplasm. Its subcellular location is the secreted. The protein resides in the cell surface. It carries out the reaction (2R)-2-phosphoglycerate = phosphoenolpyruvate + H2O. The protein operates within carbohydrate degradation; glycolysis; pyruvate from D-glyceraldehyde 3-phosphate: step 4/5. Catalyzes the reversible conversion of 2-phosphoglycerate (2-PG) into phosphoenolpyruvate (PEP). It is essential for the degradation of carbohydrates via glycolysis. The sequence is that of Enolase from Burkholderia ambifaria (strain MC40-6).